An 88-amino-acid chain; its full sequence is Small ribosomal subunit protein bS20 (88 aa).

Basic and acidic residues predominate over residues 1 to 11; it reads MANIKSSEKDI. Disordered stretches follow at residues 1–31 and 69–88; these read MANIKSSEKDIRRTKRRNAANSQNRSRLRTQ and SKNADRKKSRMAKRLNSSAA.

It belongs to the bacterial ribosomal protein bS20 family.

Its function is as follows. Binds directly to 16S ribosomal RNA. The sequence is that of Small ribosomal subunit protein bS20 from Leptospira interrogans serogroup Icterohaemorrhagiae serovar copenhageni (strain Fiocruz L1-130).